Reading from the N-terminus, the 272-residue chain is Large ribosomal subunit protein uL2cz/uL2cy (272 aa).

2 disordered regions span residues 1-33 and 220-272; these read MAIH…SGQR and VMNP…RRSK. Position 2 is an N-methylalanine (A2). A compositionally biased stretch (polar residues) spans 7–30; it reads KTSTSSTRNGAVQVKSNPRNNLIS.

The protein belongs to the universal ribosomal protein uL2 family. Component of the chloroplast large ribosomal subunit (LSU). Mature 70S chloroplast ribosomes of higher plants consist of a small (30S) and a large (50S) subunit. The 30S small subunit contains 1 molecule of ribosomal RNA (16S rRNA) and 24 different proteins. The 50S large subunit contains 3 rRNA molecules (23S, 5S and 4.5S rRNA) and 33 different proteins.

It is found in the plastid. It localises to the chloroplast. Functionally, component of the chloroplast ribosome (chloro-ribosome), a dedicated translation machinery responsible for the synthesis of chloroplast genome-encoded proteins, including proteins of the transcription and translation machinery and components of the photosynthetic apparatus. The protein is Large ribosomal subunit protein uL2cz/uL2cy (rpl2-A) of Spinacia oleracea (Spinach).